We begin with the raw amino-acid sequence, 678 residues long: Glycine--tRNA ligase beta subunit (678 aa).

This sequence belongs to the class-II aminoacyl-tRNA synthetase family. In terms of assembly, tetramer of two alpha and two beta subunits.

It is found in the cytoplasm. It catalyses the reaction tRNA(Gly) + glycine + ATP = glycyl-tRNA(Gly) + AMP + diphosphate. This is Glycine--tRNA ligase beta subunit from Streptococcus pneumoniae (strain ATCC BAA-255 / R6).